We begin with the raw amino-acid sequence, 425 residues long: MKPVWQKYIEIINQVVKPALGCTEPIAAAYGAAVAVQELGCSVPDSLEVFVSDNLYKNSMGVFVPGTGKIGLAIAAASGAIGGNADAGLEVLAAITPEQVLQAQEMIDAGKVSVKRTVTDEFIYCCVIAKFEGRESLVKICGGHTLIVEKQLNGKINFIADESSATSTGSICEGVDINIASIYEFATQVELEKIAFILQAADLNTKLSDEGMTNSYGLEVGRTMKKSIDEGILSNDLLNKIVMETAAASDARMGGATLPAMSNLGSGNQGIAATIPVVIAAKHYKNSDEQLARALILSHLGAIYIKSHYPPLSAFCGNTVTSAAAAMAMVYLAGGSFEQSCFAIQNVISDSSGMVCDGAKASCAMKVSTSSCAAVRAFLMAMNSRSVSGQGIIAKDVEQTIINIGQMISHGMPSTDTTIINIMSA.

This sequence belongs to the UPF0597 family.

The chain is UPF0597 protein Swoo_4889 from Shewanella woodyi (strain ATCC 51908 / MS32).